Reading from the N-terminus, the 285-residue chain is Non-homologous end joining protein Ku (285 aa).

The Ku domain occupies 9-176 (ISFGLVNVPV…PAEIRHLEAS (168 aa)). Residues 250–285 (AMTDQKKQQNTAESETEEKPTKSTLTPRGRRKVKGA) form a disordered region.

This sequence belongs to the prokaryotic Ku family. Homodimer. Interacts with LigD.

In terms of biological role, with LigD forms a non-homologous end joining (NHEJ) DNA repair enzyme, which repairs dsDNA breaks with reduced fidelity. Binds linear dsDNA with 5'- and 3'- overhangs but not closed circular dsDNA nor ssDNA. Recruits and stimulates the ligase activity of LigD. In Desulfitobacterium hafniense (strain DSM 10664 / DCB-2), this protein is Non-homologous end joining protein Ku.